Here is a 91-residue protein sequence, read N- to C-terminus: Small ribosomal subunit protein uS19m (91 aa).

The protein belongs to the universal ribosomal protein uS19 family. In terms of assembly, component of the mitochondrial small ribosomal subunit (mt-SSU). Mature yeast 74S mitochondrial ribosomes consist of a small (37S) and a large (54S) subunit. The 37S small subunit contains a 15S ribosomal RNA (15S mt-rRNA) and 34 different proteins. The 54S large subunit contains a 21S rRNA (21S mt-rRNA) and 46 different proteins.

The protein localises to the mitochondrion. Functionally, component of the mitochondrial ribosome (mitoribosome), a dedicated translation machinery responsible for the synthesis of mitochondrial genome-encoded proteins, including at least some of the essential transmembrane subunits of the mitochondrial respiratory chain. The mitoribosomes are attached to the mitochondrial inner membrane and translation products are cotranslationally integrated into the membrane. The protein is Small ribosomal subunit protein uS19m (RSM19) of Saccharomyces cerevisiae (strain ATCC 204508 / S288c) (Baker's yeast).